Reading from the N-terminus, the 405-residue chain is MQSWPSPPVPGIPGTGRPLRLYDSATGEVRPTDPGPVATMYVCGITPYDATHLGHAATYLAFDLVHRMWLDAGHQVHYVQNITDIDDPLLERAQRDGVSWRKLADREIGLFRDDMTALRVIPPADYIGAVEAMDEVTAAVQELIDAGAAYRVPDEQYPDVYFDVTASGQFGYESRYDEATMLRLSAERGGDPDRPGKRQRLDPLLWRVERPQEPSWSSPMGPGRPGWHIECAVIAGNRIGPVIDLQGGGSDLIFPHHECSAAHAEVLSGKRPFARHYTHAGMIGLDGEKMSKSRGNLVFVSRLLHQGVDPMAMRLGLLAGHYRQDRAWSDEVLTAAEARLARWRAAAARTGVDADSVVQAIRDGLADDLDTPTVIEALDAWAADETLDGSAVAAAVDALLGVRLV.

Position 43 (Cys43) interacts with Zn(2+). L-cysteinyl-5'-AMP is bound by residues Cys43–Thr46, Thr58, and Asn81–Thr83. Positions Ile45–His55 match the 'HIGH' region motif. The 'ERGGDP' region motif lies at Glu187–Pro192. Trp227 provides a ligand contact to L-cysteinyl-5'-AMP. Cys231 is a Zn(2+) binding site. Gly249–Asp251 contributes to the L-cysteinyl-5'-AMP binding site. Residue His256 coordinates Zn(2+). L-cysteinyl-5'-AMP is bound at residue Ile283. The short motif at Lys289–Ser293 is the 'KMSKS' region element.

It belongs to the class-I aminoacyl-tRNA synthetase family. MshC subfamily. Monomer. Zn(2+) serves as cofactor.

It catalyses the reaction 1D-myo-inositol 2-amino-2-deoxy-alpha-D-glucopyranoside + L-cysteine + ATP = 1D-myo-inositol 2-(L-cysteinylamino)-2-deoxy-alpha-D-glucopyranoside + AMP + diphosphate + H(+). Functionally, catalyzes the ATP-dependent condensation of GlcN-Ins and L-cysteine to form L-Cys-GlcN-Ins. The sequence is that of L-cysteine:1D-myo-inositol 2-amino-2-deoxy-alpha-D-glucopyranoside ligase from Nakamurella multipartita (strain ATCC 700099 / DSM 44233 / CIP 104796 / JCM 9543 / NBRC 105858 / Y-104) (Microsphaera multipartita).